Consider the following 239-residue polypeptide: Proteasome subunit beta (239 aa).

Residues 1–16 (MRQPDSSLPRTGQDHT) are compositionally biased toward polar residues. A disordered region spans residues 1–32 (MRQPDSSLPRTGQDHTLSPYEPELGEVPSNDL). Positions 1 to 44 (MRQPDSSLPRTGQDHTLSPYEPELGEVPSNDLSMADLDNVNKTG) are cleaved as a propeptide — removed in mature form; by autocatalysis. The Nucleophile role is filled by T45.

Belongs to the peptidase T1B family. The 20S proteasome core is composed of 14 alpha and 14 beta subunits that assemble into four stacked heptameric rings, resulting in a barrel-shaped structure. The two inner rings, each composed of seven catalytic beta subunits, are sandwiched by two outer rings, each composed of seven alpha subunits. The catalytic chamber with the active sites is on the inside of the barrel. Has a gated structure, the ends of the cylinder being occluded by the N-termini of the alpha-subunits. Is capped at one or both ends by the proteasome regulatory ATPase, PAN.

It localises to the cytoplasm. The enzyme catalyses Cleavage of peptide bonds with very broad specificity.. The formation of the proteasomal ATPase PAN-20S proteasome complex, via the docking of the C-termini of PAN into the intersubunit pockets in the alpha-rings, triggers opening of the gate for substrate entry. Interconversion between the open-gate and close-gate conformations leads to a dynamic regulation of the 20S proteasome proteolysis activity. Its function is as follows. Component of the proteasome core, a large protease complex with broad specificity involved in protein degradation. This chain is Proteasome subunit beta, found in Natronomonas pharaonis (strain ATCC 35678 / DSM 2160 / CIP 103997 / JCM 8858 / NBRC 14720 / NCIMB 2260 / Gabara) (Halobacterium pharaonis).